The following is a 154-amino-acid chain: Cyanate hydratase (154 aa).

Residues Arg-100, Glu-103, and Ser-126 contribute to the active site.

This sequence belongs to the cyanase family.

The catalysed reaction is cyanate + hydrogencarbonate + 3 H(+) = NH4(+) + 2 CO2. Functionally, catalyzes the reaction of cyanate with bicarbonate to produce ammonia and carbon dioxide. This Aspergillus fumigatus (strain CBS 144.89 / FGSC A1163 / CEA10) (Neosartorya fumigata) protein is Cyanate hydratase.